The chain runs to 384 residues: Glutamate 5-kinase (384 aa).

Lys24 contributes to the ATP binding site. Residues Ser64, Asp149, and Asn161 each contribute to the substrate site. Residues 181-182 (TD) and 223-229 (TGGMRTK) contribute to the ATP site. The region spanning 288-370 (PGAILIDAGA…RDIQTLLGYT (83 aa)) is the PUA domain.

The protein belongs to the glutamate 5-kinase family.

It is found in the cytoplasm. It catalyses the reaction L-glutamate + ATP = L-glutamyl 5-phosphate + ADP. It participates in amino-acid biosynthesis; L-proline biosynthesis; L-glutamate 5-semialdehyde from L-glutamate: step 1/2. In terms of biological role, catalyzes the transfer of a phosphate group to glutamate to form L-glutamate 5-phosphate. This Xylella fastidiosa (strain M23) protein is Glutamate 5-kinase.